The following is a 377-amino-acid chain: Probable trehalose-phosphate phosphatase G (377 aa).

The tract at residues 1-20 is disordered; the sequence is MDLNINKTTPVLSDPTTPVS.

It belongs to the trehalose phosphatase family. A divalent metal cation is required as a cofactor.

It carries out the reaction alpha,alpha-trehalose 6-phosphate + H2O = alpha,alpha-trehalose + phosphate. It participates in glycan biosynthesis; trehalose biosynthesis. Functionally, removes the phosphate from trehalose 6-phosphate to produce free trehalose. Trehalose accumulation in plant may improve abiotic stress tolerance. In Arabidopsis thaliana (Mouse-ear cress), this protein is Probable trehalose-phosphate phosphatase G (TPPG).